The sequence spans 311 residues: Dihydroorotate dehydrogenase B (NAD(+)), catalytic subunit (311 aa).

Residues Lys-52, 76-80 (NAMGL), and Asn-133 contribute to the substrate site. 52–53 (KS) serves as a coordination point for FMN. Asn-133 contributes to the FMN binding site. The active-site Nucleophile is the Cys-136. Residues Lys-171 and Ile-197 each contribute to the FMN site. 198–199 (NT) is a substrate binding site. FMN is bound by residues Gly-223, 249-250 (GG), and 271-272 (GS).

Belongs to the dihydroorotate dehydrogenase family. Type 1 subfamily. As to quaternary structure, heterotetramer of 2 PyrK and 2 PyrD type B subunits. The cofactor is FMN.

The protein localises to the cytoplasm. The catalysed reaction is (S)-dihydroorotate + NAD(+) = orotate + NADH + H(+). It functions in the pathway pyrimidine metabolism; UMP biosynthesis via de novo pathway; orotate from (S)-dihydroorotate (NAD(+) route): step 1/1. In terms of biological role, catalyzes the conversion of dihydroorotate to orotate with NAD(+) as electron acceptor. In Methanosarcina acetivorans (strain ATCC 35395 / DSM 2834 / JCM 12185 / C2A), this protein is Dihydroorotate dehydrogenase B (NAD(+)), catalytic subunit (pyrD).